The primary structure comprises 296 residues: Probable lipid kinase YegS-like (296 aa).

The region spanning 1-130 is the DAGKc domain; the sequence is MPHTLLILNG…IDLAQVNGEH (130 aa). ATP-binding positions include T37, 63-69, and T92; that span reads GDGTINE. L212, D215, and L217 together coordinate Mg(2+). E268 serves as the catalytic Proton acceptor.

The protein belongs to the diacylglycerol/lipid kinase family. YegS lipid kinase subfamily. Mg(2+) serves as cofactor. Requires Ca(2+) as cofactor.

Its subcellular location is the cytoplasm. Functionally, probably phosphorylates lipids; the in vivo substrate is unknown. The polypeptide is Probable lipid kinase YegS-like (Yersinia pseudotuberculosis serotype I (strain IP32953)).